The sequence spans 158 residues: uncharacterized protein (158 aa).

A run of 2 helical transmembrane segments spans residues 10–30 (LFFI…LNHF) and 40–60 (YITF…NFFL).

It is found in the membrane. This is an uncharacterized protein from Schizosaccharomyces pombe (strain 972 / ATCC 24843) (Fission yeast).